We begin with the raw amino-acid sequence, 326 residues long: MGKTVKVAVTGAAGQIGYSLLFRIASGQMFGTDTAVEIQMLELEAAIPAAKGVIMELEDCAFPLLQKVTVSSDLDIAFKDINWALLVGSVPRKAGMERGDLLKINGGIFINQGKAIEKNAASDVRVLVVGNPCNTNCLIAMNNAKGIPSDRWFAMTKLDENRAKSQLASKAGVPVKEVTHLGIWGNHSSTQYPDFYNAKISGKPVTDVISDHEWLKGDFIKNVQQRGAEIIKARGASSAASAANGVVDTVRAIITPTASGDAFSAAIASDGSYGTEKGLIFGFPLKSDGKKVGIVQGLPFNDFAKEKFKTTHDELISERNEVKDML.

11-17 (GAAGQIG) contacts NAD(+). Substrate contacts are provided by Arg92 and Arg98. Residues Asn105, Gln112, and 129-131 (VGN) each bind NAD(+). Substrate contacts are provided by Asn131 and Arg162. Catalysis depends on His187, which acts as the Proton acceptor.

This sequence belongs to the LDH/MDH superfamily. MDH type 2 family.

It catalyses the reaction (S)-malate + NAD(+) = oxaloacetate + NADH + H(+). Its function is as follows. Catalyzes the reversible oxidation of malate to oxaloacetate. This Leptospira borgpetersenii serovar Hardjo-bovis (strain JB197) protein is Malate dehydrogenase.